The primary structure comprises 368 residues: Protein-glutamate methylesterase/protein-glutamine glutaminase (368 aa).

Residues 9 to 126 form the Response regulatory domain; that stretch reads KVLVVDDSAF…SINMKELKDE (118 aa). Asp-60 bears the 4-aspartylphosphate mark. The CheB-type methylesterase domain occupies 161–354; it reads SVPARIAVAI…ETVVKAVEII (194 aa). Active-site residues include Ser-173, His-200, and Asp-296.

It belongs to the CheB family. Post-translationally, phosphorylated by CheA. Phosphorylation of the N-terminal regulatory domain activates the methylesterase activity.

It is found in the cytoplasm. The catalysed reaction is [protein]-L-glutamate 5-O-methyl ester + H2O = L-glutamyl-[protein] + methanol + H(+). The enzyme catalyses L-glutaminyl-[protein] + H2O = L-glutamyl-[protein] + NH4(+). Functionally, involved in chemotaxis. Part of a chemotaxis signal transduction system that modulates chemotaxis in response to various stimuli. Catalyzes the demethylation of specific methylglutamate residues introduced into the chemoreceptors (methyl-accepting chemotaxis proteins or MCP) by CheR. Also mediates the irreversible deamidation of specific glutamine residues to glutamic acid. The protein is Protein-glutamate methylesterase/protein-glutamine glutaminase of Pyrococcus horikoshii (strain ATCC 700860 / DSM 12428 / JCM 9974 / NBRC 100139 / OT-3).